Here is a 1667-residue protein sequence, read N- to C-terminus: Myomesin-1 (1667 aa).

Ser-124 and Ser-142 each carry phosphoserine. Low complexity predominate over residues 192-210; that stretch reads SKQSTASKQSATSKRTTST. The interval 192-217 is disordered; sequence SKQSTASKQSATSKRTTSTLQREETF. 2 consecutive Ig-like C2-type domains span residues 258 to 349 and 376 to 478; these read PEFI…ASVV and PYGY…AYVF. 3 consecutive Fibronectin type-III domains span residues 492–587, 620–714, and 721–814; these read APLD…ALDP, PPTD…VVGD, and APGK…VKAA. The tract at residues 818–915 is disordered; that stretch reads GVSPDVWPQL…PKKKKDPVAV (98 aa). Ser-863 and Ser-867 each carry phosphoserine. Over residues 885–894 the composition is skewed to low complexity; the sequence is EPLSSPPQEA. Fibronectin type-III domains lie at 918-1016 and 1023-1122; these read APYD…CEEW and PPHS…TRPG. Phosphoserine is present on Ser-1036. Ig-like C2-type domains are found at residues 1114–1212, 1340–1426, and 1555–1644; these read PVVA…EEMK, PHFA…LKLV, and RVLG…FTVS.

Homodimer. Interacts with TTN/titin and PNKD. In terms of tissue distribution, ubiquitously expressed in all striated muscles. Expressed in all fiber types.

The protein localises to the cytoplasm. Its subcellular location is the myofibril. It localises to the sarcomere. The protein resides in the m line. Its function is as follows. May link the intermediate filament cytoskeleton to the M-disk of the myofibrils in striated muscle. May also contact myosin filaments. Also binds beta-integrins. The polypeptide is Myomesin-1 (Myom1) (Mus musculus (Mouse)).